The chain runs to 80 residues: Exodeoxyribonuclease 7 small subunit (80 aa).

The protein belongs to the XseB family. As to quaternary structure, heterooligomer composed of large and small subunits.

The protein resides in the cytoplasm. It catalyses the reaction Exonucleolytic cleavage in either 5'- to 3'- or 3'- to 5'-direction to yield nucleoside 5'-phosphates.. Functionally, bidirectionally degrades single-stranded DNA into large acid-insoluble oligonucleotides, which are then degraded further into small acid-soluble oligonucleotides. This is Exodeoxyribonuclease 7 small subunit from Vibrio atlanticus (strain LGP32) (Vibrio splendidus (strain Mel32)).